The chain runs to 200 residues: Pyridoxine/pyridoxamine 5'-phosphate oxidase (200 aa).

FMN is bound by residues 48–53, 63–64, K70, and Q92; these read RMVLLK and YT. K53 lines the substrate pocket. Substrate contacts are provided by Y110, R114, and S118. FMN contacts are provided by residues 127-128 and W171; that span reads QS. Residue 177–179 coordinates substrate; sequence RLH. R181 contributes to the FMN binding site.

The protein belongs to the pyridoxamine 5'-phosphate oxidase family. In terms of assembly, homodimer. FMN is required as a cofactor.

The catalysed reaction is pyridoxamine 5'-phosphate + O2 + H2O = pyridoxal 5'-phosphate + H2O2 + NH4(+). It catalyses the reaction pyridoxine 5'-phosphate + O2 = pyridoxal 5'-phosphate + H2O2. It participates in cofactor metabolism; pyridoxal 5'-phosphate salvage; pyridoxal 5'-phosphate from pyridoxamine 5'-phosphate: step 1/1. The protein operates within cofactor metabolism; pyridoxal 5'-phosphate salvage; pyridoxal 5'-phosphate from pyridoxine 5'-phosphate: step 1/1. Catalyzes the oxidation of either pyridoxine 5'-phosphate (PNP) or pyridoxamine 5'-phosphate (PMP) into pyridoxal 5'-phosphate (PLP). The protein is Pyridoxine/pyridoxamine 5'-phosphate oxidase of Cereibacter sphaeroides (strain ATCC 17029 / ATH 2.4.9) (Rhodobacter sphaeroides).